An 857-amino-acid polypeptide reads, in one-letter code: uncharacterized protein (857 aa).

4 disordered regions span residues 316–339 (PPAP…TKEN), 484–561 (AKQP…PRTN), 619–777 (GQFP…PKPQ), and 809–836 (EQRP…STGK). Composition is skewed to basic and acidic residues over residues 324–339 (PENK…TKEN), 518–534 (KKTE…KAEE), and 630–640 (QRAESSIDKDC). The segment covering 683-700 (RTTTVQPHSHSAQPTTLR) has biased composition (polar residues). Over residues 708-725 (SSSLIASAKPAPPISSSS) the composition is skewed to low complexity. A compositionally biased stretch (polar residues) spans 726 to 738 (TGPNVTNPNQSSA). Residues 809–828 (EQRPEREAMKRQAQQERENA) show a composition bias toward basic and acidic residues.

This is an uncharacterized protein from Mus musculus (Mouse).